A 146-amino-acid polypeptide reads, in one-letter code: Ribosomal RNA large subunit methyltransferase H (146 aa).

S-adenosyl-L-methionine-binding positions include Leu-68, Gly-95, and 114–119 (LSSLTF).

Belongs to the RNA methyltransferase RlmH family. As to quaternary structure, homodimer.

The protein resides in the cytoplasm. The enzyme catalyses pseudouridine(1915) in 23S rRNA + S-adenosyl-L-methionine = N(3)-methylpseudouridine(1915) in 23S rRNA + S-adenosyl-L-homocysteine + H(+). Functionally, specifically methylates the pseudouridine at position 1915 (m3Psi1915) in 23S rRNA. The protein is Ribosomal RNA large subunit methyltransferase H of Thermodesulfovibrio yellowstonii (strain ATCC 51303 / DSM 11347 / YP87).